Consider the following 92-residue polypeptide: Small ribosomal subunit protein bS20 (92 aa).

The tract at residues 1-23 (MANSPSAKKRAIQAEKRRSHNAS) is disordered.

Belongs to the bacterial ribosomal protein bS20 family.

Its function is as follows. Binds directly to 16S ribosomal RNA. In Stutzerimonas stutzeri (strain A1501) (Pseudomonas stutzeri), this protein is Small ribosomal subunit protein bS20.